The chain runs to 134 residues: MATDRRVARVAELIKREISQMLMSGIKDDRVGSGMVSVTDVDLSGDLQHAKIFVSIYGTEAARAETMAGLKAATGYVRSELGHRVRLRRTPEVVFLEDRSLERGTQVLSLLNRLSEERQKNADLDEMAAEEPES.

Belongs to the RbfA family. As to quaternary structure, monomer. Binds 30S ribosomal subunits, but not 50S ribosomal subunits or 70S ribosomes.

It is found in the cytoplasm. Its function is as follows. One of several proteins that assist in the late maturation steps of the functional core of the 30S ribosomal subunit. Associates with free 30S ribosomal subunits (but not with 30S subunits that are part of 70S ribosomes or polysomes). Required for efficient processing of 16S rRNA. May interact with the 5'-terminal helix region of 16S rRNA. The sequence is that of Ribosome-binding factor A from Cyanothece sp. (strain PCC 7425 / ATCC 29141).